The chain runs to 193 residues: Selenate reductase assembly chaperone protein (193 aa).

This sequence belongs to the type II DMSO reductase enzyme chaperone family.

It is found in the cytoplasm. Functionally, may function as a system-specific chaperone protein essential for the assembly of an active selenate reductase SerABC. This is Selenate reductase assembly chaperone protein from Thauera selenatis.